The primary structure comprises 159 residues: Transcription elongation factor GreA (159 aa).

A coiled-coil region spans residues 43 to 76 (LSENAEYDAAREEQSQLEAKIGDLENKLASATIL).

This sequence belongs to the GreA/GreB family.

Functionally, necessary for efficient RNA polymerase transcription elongation past template-encoded arresting sites. The arresting sites in DNA have the property of trapping a certain fraction of elongating RNA polymerases that pass through, resulting in locked ternary complexes. Cleavage of the nascent transcript by cleavage factors such as GreA or GreB allows the resumption of elongation from the new 3'terminus. GreA releases sequences of 2 to 3 nucleotides. The polypeptide is Transcription elongation factor GreA (Chlorobaculum parvum (strain DSM 263 / NCIMB 8327) (Chlorobium vibrioforme subsp. thiosulfatophilum)).